Consider the following 419-residue polypeptide: C2 calcium-dependent domain-containing protein 4C (419 aa).

Disordered regions lie at residues 1-96, 115-136, 151-225, and 247-300; these read MRKT…LASE, EDWT…MSLP, AESP…SPFG, and VSQL…HTVK. The segment covering 75–94 has biased composition (low complexity); sequence LASPGPRRAPRSPRLPAKLA. Residues 186–196 show a composition bias toward gly residues; it reads KGNGGDGGSRE. The segment covering 212–225 has biased composition (polar residues); that stretch reads ESDTGSSAESSPFG. Ser259, Ser261, and Ser270 each carry phosphoserine. Positions 303–419 constitute a C2 domain; it reads TRGSVRLLAE…LPLTSLLPFL (117 aa).

It belongs to the C2CD4 family.

This chain is C2 calcium-dependent domain-containing protein 4C (C2cd4c), found in Mus musculus (Mouse).